The chain runs to 101 residues: Nucleoid-associated protein Acid345_1974 (101 aa).

Belongs to the YbaB/EbfC family. As to quaternary structure, homodimer.

The protein resides in the cytoplasm. The protein localises to the nucleoid. Its function is as follows. Binds to DNA and alters its conformation. May be involved in regulation of gene expression, nucleoid organization and DNA protection. In Koribacter versatilis (strain Ellin345), this protein is Nucleoid-associated protein Acid345_1974.